We begin with the raw amino-acid sequence, 235 residues long: Glycerol uptake facilitator protein 2 (235 aa).

6 helical membrane-spanning segments follow: residues 4-24, 39-59, 62-82, 83-103, 134-154, and 165-185; these read FLGE…SGAA, FICL…GQFG, GHLN…PMAN, VWPY…IVII, VFNF…LLNL, and MVGL…GFAI. An NPA 1 motif is present at residues 65–67; sequence NPA. The NPA 2 motif lies at 186–188; that stretch reads NPA. The helical transmembrane segment at 210 to 230 threads the bilayer; the sequence is WGYAWVPMFGPLLGGILAAGL.

The protein belongs to the MIP/aquaporin (TC 1.A.8) family.

The protein resides in the cell membrane. Transporter that facilitates the transmembrane diffusion of water, dihydroxyacetone, glycerol and H(2)O(2). Is not permeable to urea and D/L-lactic acid. This is Glycerol uptake facilitator protein 2 from Lactiplantibacillus plantarum (strain ATCC BAA-793 / NCIMB 8826 / WCFS1) (Lactobacillus plantarum).